A 237-amino-acid polypeptide reads, in one-letter code: Phosphoribosylaminoimidazole-succinocarboxamide synthase (237 aa).

Belongs to the SAICAR synthetase family.

It carries out the reaction 5-amino-1-(5-phospho-D-ribosyl)imidazole-4-carboxylate + L-aspartate + ATP = (2S)-2-[5-amino-1-(5-phospho-beta-D-ribosyl)imidazole-4-carboxamido]succinate + ADP + phosphate + 2 H(+). It functions in the pathway purine metabolism; IMP biosynthesis via de novo pathway; 5-amino-1-(5-phospho-D-ribosyl)imidazole-4-carboxamide from 5-amino-1-(5-phospho-D-ribosyl)imidazole-4-carboxylate: step 1/2. This chain is Phosphoribosylaminoimidazole-succinocarboxamide synthase, found in Citrobacter koseri (strain ATCC BAA-895 / CDC 4225-83 / SGSC4696).